A 279-amino-acid polypeptide reads, in one-letter code: MTDLQIAVDPTTDVEALILDWAGTVVDFGSFAPTSIFVEAFARAYDFPVTLDEARQPMGLGKWDHIAALGRLPSVDARWQARFGHPMSHAEVDHLYHTFMPLQIAAVTRFADPIPGVLPVLDALRGQGMKIGSCSGYPRPVMETLVPAAADHGYRPDHWVATDDLKAGGRPGPWMALANVIELGVNAVHRCIKVDDAVPGISEGLNAGMWTVGLSVSGNEFGATWEAFAAMSEAEIAARRAPAEAKLRAAGAHYVIDTLADIAPVIADINRRLAAGERP.

Residue Asp20 is the Nucleophile of the active site. Mg(2+) contacts are provided by Asp20 and Ala22. Lys62 acts as the Schiff-base intermediate with substrate in catalysis. Asp196 contacts Mg(2+).

This sequence belongs to the HAD-like hydrolase superfamily. PhnX family. As to quaternary structure, homodimer. Mg(2+) serves as cofactor.

It catalyses the reaction phosphonoacetaldehyde + H2O = acetaldehyde + phosphate + H(+). In terms of biological role, involved in phosphonate degradation. In Aeromonas hydrophila subsp. hydrophila (strain ATCC 7966 / DSM 30187 / BCRC 13018 / CCUG 14551 / JCM 1027 / KCTC 2358 / NCIMB 9240 / NCTC 8049), this protein is Phosphonoacetaldehyde hydrolase.